We begin with the raw amino-acid sequence, 465 residues long: UDP-N-acetylmuramoylalanine--D-glutamate ligase (465 aa).

Position 127 to 133 (127 to 133 (GSNGKST)) interacts with ATP.

The protein belongs to the MurCDEF family.

Its subcellular location is the cytoplasm. The catalysed reaction is UDP-N-acetyl-alpha-D-muramoyl-L-alanine + D-glutamate + ATP = UDP-N-acetyl-alpha-D-muramoyl-L-alanyl-D-glutamate + ADP + phosphate + H(+). Its pathway is cell wall biogenesis; peptidoglycan biosynthesis. Cell wall formation. Catalyzes the addition of glutamate to the nucleotide precursor UDP-N-acetylmuramoyl-L-alanine (UMA). The chain is UDP-N-acetylmuramoylalanine--D-glutamate ligase from Cereibacter sphaeroides (strain ATCC 17029 / ATH 2.4.9) (Rhodobacter sphaeroides).